A 1289-amino-acid chain; its full sequence is Ethylene-insensitive protein 2.1 (1289 aa).

The next 5 membrane-spanning stretches (helical) occupy residues 18 to 38 (LLPAVGPGLLIAIGYVDPGKW), 48 to 68 (FGFDLVLPMLLFNFVAILCQY), 96 to 116 (FLGVQAALSVIALDLTMILGI), 128 to 148 (LSTCVSLAAAEAILFPFFATL), and 155 to 175 (SFLCTCIAGFILLLYFFGVLI). A glycan (N-linked (GlcNAc...) asparagine) is linked at asparagine 185. The chain crosses the membrane as a helical span at residues 199–219 (LMSLLGASIMPHNFFLHSAIV). Residue asparagine 227 is glycosylated (N-linked (GlcNAc...) asparagine). The next 7 membrane-spanning stretches (helical) occupy residues 235–255 (LNHFFAILCIFSGIYLVNFVL), 260–280 (ANVFHSTGLVLLTFPDAMSLM), 288–308 (VAPFGFSLILFFANQITAFSW), 335–355 (IIAVVPALYCVWTSGVEGIYQ), 356–376 (LLILTQVMVALLLPSSVIPLF), 393–413 (FLEFVALISFMGMLGIKIIFV), and 439–459 (YIVLLITACSSFCLMLWLAAT). Asparagine 521 is a glycosylation site (N-linked (GlcNAc...) asparagine). The disordered stretch occupies residues 611-659 (LHTEKEDDEGDNWEPEDSSKGVPGSTLSLTSDGPGSFRSLSGKSDAGGN). Over residues 616-626 (EDDEGDNWEPE) the composition is skewed to acidic residues. The span at 635 to 652 (STLSLTSDGPGSFRSLSG) shows a compositional bias: polar residues. Phosphoserine occurs at positions 646 and 663. A glycan (N-linked (GlcNAc...) asparagine) is linked at asparagine 745. A disordered region spans residues 792–816 (SIADSSERRYSGVRTPPSSDGWDNQ). Residues 807–816 (PPSSDGWDNQ) are compositionally biased toward polar residues. Threonine 819 bears the Phosphothreonine mark. Serine 923 bears the Phosphoserine mark. Residue asparagine 1025 is glycosylated (N-linked (GlcNAc...) asparagine). Positions 1208–1227 (HRSSPPASNGMLPPASKPGR) are disordered. Residues 1274-1281 (LKRYKRRL) carry the Nuclear localization signal motif.

The protein belongs to the NRAMP (TC 2.A.55) family.

It localises to the endoplasmic reticulum membrane. The protein resides in the nucleus. It is found in the cytoplasm. In terms of biological role, central factor in signaling pathways regulated by ethylene (ET) and involved in various processes including development, plant defense, senescence, nucleotide sugar flux, and tropisms. Functionally, trafficking signal inducing ethylene response. The nuclear localization is both necessary and sufficient to activate EIN3-mediated transcription and ethylene responses. The protein is Ethylene-insensitive protein 2.1 of Populus trichocarpa (Western balsam poplar).